A 222-amino-acid chain; its full sequence is Secreted protein D (222 aa).

A signal peptide spans 1–22 (MKIYYLFFVLIYLIYFINLVYC). An N-linked (GlcNAc...) asparagine glycan is attached at Asn25.

The protein belongs to the Sct family.

It is found in the secreted. This is Secreted protein D from Dictyostelium discoideum (Social amoeba).